An 831-amino-acid polypeptide reads, in one-letter code: Multiphosphoryl transfer protein (831 aa).

The HPr domain maps to Met1 to Ser90. Residue His15 is the Pros-phosphohistidine intermediate; for HPr activity of the active site. Position 15 is a phosphohistidine; by EI (His15). Residues Gly119–Asp650 are PTS EI. The Tele-phosphohistidine intermediate; for PTS EI activity role is filled by His298. His298 carries the phosphohistidine; by autocatalysis modification. Residues Arg405 and Arg441 each coordinate phosphoenolpyruvate. 2 residues coordinate Mg(2+): Glu540 and Asp564. Residues Asn563–Asp564 and Arg574 contribute to the phosphoenolpyruvate site. Cys611 serves as the catalytic Proton donor; for EI activity. The PTS EIIA type-2 domain occupies Pro685–Glu828. His747 acts as the Tele-phosphohistidine intermediate; for PTS EIIA activity in catalysis. His747 carries the phosphohistidine; by HPr modification.

The protein belongs to the PEP-utilizing enzyme family. Mg(2+) serves as cofactor.

It localises to the cytoplasm. The enzyme catalyses L-histidyl-[protein] + phosphoenolpyruvate = N(pros)-phospho-L-histidyl-[protein] + pyruvate. It carries out the reaction D-fructose(out) + N(pros)-phospho-L-histidyl-[protein] = D-fructose 1-phosphate(in) + L-histidyl-[protein]. Multifunctional protein that includes general (non sugar-specific) and sugar-specific components of the phosphoenolpyruvate-dependent sugar phosphotransferase system (sugar PTS). This major carbohydrate active transport system catalyzes the phosphorylation of incoming sugar substrates concomitantly with their translocation across the cell membrane. The enzyme II FryABC PTS system is involved in fructose transport. In Escherichia coli O157:H7, this protein is Multiphosphoryl transfer protein (fryA).